The following is a 528-amino-acid chain: GMP synthase [glutamine-hydrolyzing] (528 aa).

The 192-residue stretch at 13–204 (AIVILDFGSQ…VYDICSCEPD (192 aa)) folds into the Glutamine amidotransferase type-1 domain. Residue C90 is the Nucleophile of the active site. Residues H178 and E180 contribute to the active site. A GMPS ATP-PPase domain is found at 205–403 (WTTNLFIDEA…LGLPDEIVRR (199 aa)). Residue 232-238 (SGGVDSS) participates in ATP binding.

In terms of assembly, homodimer.

The catalysed reaction is XMP + L-glutamine + ATP + H2O = GMP + L-glutamate + AMP + diphosphate + 2 H(+). Its pathway is purine metabolism; GMP biosynthesis; GMP from XMP (L-Gln route): step 1/1. Functionally, catalyzes the synthesis of GMP from XMP. This Prochlorococcus marinus (strain NATL1A) protein is GMP synthase [glutamine-hydrolyzing].